We begin with the raw amino-acid sequence, 520 residues long: Hydroxymethylglutaryl-CoA synthase, cytoplasmic (520 aa).

Ser-4 carries the post-translational modification Phosphoserine. (3S)-3-hydroxy-3-methylglutaryl-CoA-binding residues include Asp-43 and Ala-44. Position 44-46 (44-46) interacts with CoA; that stretch reads AGK. At Lys-46 the chain carries N6-acetyllysine. Glu-95 acts as the Proton donor/acceptor in catalysis. The (3S)-3-hydroxy-3-methylglutaryl-CoA site is built by Cys-129, Asn-167, Thr-171, Ser-221, and His-264. Cys-129 acts as the Acyl-thioester intermediate in catalysis. CoA is bound at residue Asn-167. Position 221 (Ser-221) interacts with CoA. The active-site Proton donor/acceptor is the His-264. Residues Lys-269 and Lys-273 each coordinate CoA. Residues Lys-273, Asn-343, and Ser-377 each contribute to the (3S)-3-hydroxy-3-methylglutaryl-CoA site. Lys-273 is subject to N6-acetyllysine. The interval 487–520 is disordered; it reads NTATEHIPSPAKKVPRLPATSGEPESAVISNGEH. 2 positions are modified to phosphoserine: Ser-495 and Ser-516.

It belongs to the thiolase-like superfamily. HMG-CoA synthase family. As to quaternary structure, homodimer.

Its subcellular location is the cytoplasm. It carries out the reaction acetoacetyl-CoA + acetyl-CoA + H2O = (3S)-3-hydroxy-3-methylglutaryl-CoA + CoA + H(+). The protein operates within metabolic intermediate biosynthesis; (R)-mevalonate biosynthesis; (R)-mevalonate from acetyl-CoA: step 2/3. Catalyzes the condensation of acetyl-CoA with acetoacetyl-CoA to form HMG-CoA, which is converted by HMG-CoA reductase (HMGCR) into mevalonate, a precursor for cholesterol synthesis. The protein is Hydroxymethylglutaryl-CoA synthase, cytoplasmic of Rattus norvegicus (Rat).